We begin with the raw amino-acid sequence, 306 residues long: Mitochondrial basic amino acids transporter (306 aa).

Helical transmembrane passes span 2–22, 61–81, 96–116, 153–172, 187–207, and 255–275; these read ALDFLAGCAGGVAGVIVGHPF, GLGSPLMGLTFINALVFGVQG, FLAGAAAGAIQCVICCPMELA, GMVSTLLRETPSFGVYFLTY, LLVPKLLLAGGTSGITSWLST, and LLRAFPVNAATFATVTVVLTY. Solcar repeat units follow at residues 2 to 86, 90 to 178, and 190 to 275; these read ALDF…TLRA, DSPL…LTRA, and PKLL…VLTY. Residues 283–306 are disordered; the sequence is VDSEAAPGASTTPAGPALAQPSSL. Residues 287 to 306 show a composition bias toward low complexity; the sequence is AAPGASTTPAGPALAQPSSL.

Belongs to the mitochondrial carrier (TC 2.A.29) family.

It localises to the mitochondrion inner membrane. It carries out the reaction L-lysine(out) + L-arginine(in) = L-lysine(in) + L-arginine(out). It catalyses the reaction L-histidine(out) + L-arginine(in) = L-histidine(in) + L-arginine(out). The catalysed reaction is L-ornithine(in) + L-arginine(out) = L-ornithine(out) + L-arginine(in). The enzyme catalyses L-homoarginine(in) + L-arginine(out) = L-homoarginine(out) + L-arginine(in). It carries out the reaction N(omega)-methyl-L-arginine(in) + L-arginine(out) = N(omega)-methyl-L-arginine(out) + L-arginine(in). It catalyses the reaction L-arginine(in) = L-arginine(out). The catalysed reaction is L-lysine(in) = L-lysine(out). The enzyme catalyses L-ornithine(in) = L-ornithine(out). It carries out the reaction L-histidine(out) = L-histidine(in). In terms of biological role, mitochondrial transporter of arginine, lysine, homoarginine, methylarginine and, to a much lesser extent, ornithine and histidine. Does not transport carnitine nor acylcarnitines. Functions by both counter-exchange and uniport mechanisms. Plays a physiological role in the import of basic amino acids into mitochondria for mitochondrial protein synthesis and amino acid degradation. In Rattus norvegicus (Rat), this protein is Mitochondrial basic amino acids transporter (Slc25a29).